The following is a 1082-amino-acid chain: Transcription elongation factor SPT5 (1082 aa).

Residues 1–28 are compositionally biased toward acidic residues; that stretch reads MSDSEDSNFSEEEDSERSSEAEEAEVEE. Residues 1–88 form a disordered region; it reads MSDSEDSNFS…DVDDEYEDED (88 aa). Ser-32 and Ser-36 each carry phosphoserine. Acidic residues-rich tracts occupy residues 38–62 and 76–88; these read KEEE…EDDD and DEAD…EDED. Lys-141 participates in a covalent cross-link: Glycyl lysine isopeptide (Lys-Gly) (interchain with G-Cter in SUMO2). The tract at residues 174–268 is interaction with SUPT4H1 and SUPT4H2; the sequence is DPNLWTVKCK…TDVLKVVKEV (95 aa). Residues 271-304 enclose the KOW 1 domain; it reads LKPKSWVRLKRGIYKDDIAQVDYVEPSQNTISLK. The interval 311–418 is interaction with RNA polymerase II; it reads YDRIKARMSL…STGKEREHNF (108 aa). The UBR5-degron signature appears at 326–332; the sequence is KRKKFKR. 2 KOW domains span residues 418–449 and 470–501; these read FQPG…ITIM and FKMG…VILF. An RNA-binding site is contributed by Lys-577. A KOW 4 domain is found at 592 to 625; sequence IHVKDIVKVIDGPHSGREGEIRHLYRSFAFLHCK. Arg-617 lines the DNA pocket. Phosphothreonine is present on Thr-661. 2 positions are modified to phosphoserine: Ser-664 and Ser-684. The segment at 669-694 is disordered; that stretch reads SPMHPSAEGQHGGFGSPGGMSRGRGR. The span at 678-690 shows a compositional bias: gly residues; the sequence is QHGGFGSPGGMSR. Arg-690 and Arg-692 each carry asymmetric dimethylarginine; alternate. Omega-N-methylarginine; alternate is present on residues Arg-690 and Arg-692. Arg-692 carries the post-translational modification Symmetric dimethylarginine; alternate. The KOW 5 domain maps to 698 to 731; the sequence is ELIGQTVRISQGPYKGYIGVVKDATESTARVELH. Lys-712 is modified (N6-acetyllysine). Residues 741 to 801 are compositionally biased toward polar residues; it reads RQRLTTVDSQ…RTPHYGSQTP (61 aa). The tract at residues 741–972 is disordered; it reads RQRLTTVDSQ…GSGIEQNSSD (232 aa). A CTR1-1; approximate repeat occupies 748 to 753; it reads DSQRPG. Residues 748-811 form a 9 X 7 AA approximate tandem repeats of G-S-[QR]-T-P-X-[YQ], motif CTR1 region; the sequence is DSQRPGGMTS…LHDGSRTPAQ (64 aa). The stretch at 754–759 is one CTR1-2 repeat; it reads GMTSTY. The stretch at 760–765 is one CTR1-3 repeat; it reads GRTPMY. The stretch at 766-772 is one CTR1-4 repeat; the sequence is GSQTPMY. Thr-769 and Thr-778 each carry phosphothreonine; by CDK9. The stretch at 775–781 is one CTR1-5 repeat; the sequence is GSRTPMY. The CTR1-6 repeat unit spans residues 782–788; sequence GSQTPLQ. Ser-783 carries the post-translational modification Phosphoserine. A phosphothreonine mark is found at Thr-785 and Thr-793. One copy of the CTR1-7 repeat lies at 790 to 796; the sequence is GSRTPHY. A CTR1-8 repeat occupies 797 to 803; sequence GSQTPLH. Ser-798 carries the phosphoserine modification. 2 positions are modified to phosphothreonine: Thr-800 and Thr-808. The CTR1-9 repeat unit spans residues 805–811; the sequence is GSRTPAQ. Positions 828-838 are enriched in acidic residues; the sequence is EEYEYAFDDEP. A CTR2-1 repeat occupies 838 to 845; it reads PTPSPQAY. Residues 838 to 944 form a 10 X 8 AA approximate tandem repeats of P-[TS]-P-S-P-[QA]-[SG]-Y, motif CTR2 region; the sequence is PTPSPQAYGG…ASPSPSPVGY (107 aa). A CTR2-2; approximate repeat occupies 848–856; it reads TPNPQTPGY. Over residues 851-860 the composition is skewed to pro residues; the sequence is PQTPGYPDPS. Residues 857–863 form a CTR2-3; approximate repeat; the sequence is PDPSSPQ. Residues 861-884 show a composition bias toward polar residues; it reads SPQVNPQYNPQTPGTPAMYNTDQF. Residues 875–879 form a CTR2-4; half-length repeat; it reads TPAMY. One copy of the CTR2-5; approximate repeat lies at 890-896; it reads PSPQGSY. Residues 890–905 are compositionally biased toward low complexity; sequence PSPQGSYQPSPSPQSY. Residues 898 to 905 form a CTR2-6 repeat; the sequence is PSPSPQSY. The stretch at 910-915 is one CTR2-7; approximate repeat; the sequence is PSPAGY. Residues 918–924 form a CTR2-8 repeat; sequence THSPASY. A CTR2-9 repeat occupies 926-933; that stretch reads PTPSPMAY. One copy of the CTR2-10 repeat lies at 937–944; the sequence is PSPSPVGY. Residue Thr-1028 is modified to Phosphothreonine. Residue Lys-1031 forms a Glycyl lysine isopeptide (Lys-Gly) (interchain with G-Cter in SUMO2) linkage.

Belongs to the SPT5 family. Interacts with SUPT4H1 to form DSIF. DSIF interacts with the positive transcription elongation factor b complex (P-TEFb complex), which is composed of CDK9 and cyclin-T (CCNT1 or CCNT2). DSIF interacts with RNA polymerase II, and this interaction is reduced by phosphorylation of the C-terminal domain (CTD) of POLR2A by P-TEFb. DSIF also interacts with the NELF complex, which is composed of NELFA, NELFB, NELFD and NELFE, and this interaction occurs following prior binding of DSIF to RNA polymerase II. Also interacts with PRMT1/HRMT1L2, HTATSF1/TATSF1, RNGTT/CAP1A, PRMT5/SKB1, SUPT6H, and can interact with PIN1. Component of a complex which is at least composed of HTATSF1/Tat-SF1, the P-TEFb complex components CDK9 and CCNT1, RNA polymerase II, SUPT5H, and NCL/nucleolin. Interacts with MCM3AP. Methylated by PRMT1/HRMT1L2 and PRMT5/SKB1. Methylation negatively regulates interaction with P-TEFb and RNA polymerase II. In terms of processing, phosphorylated by CDK7 and CDK9. Phosphorylation by P-TEFb (CDK9) at Thr residues of the C-terminal repeats alleviates transcriptional pausing and promotes transcription elongation. Dephosphorylated by the INTAC complex when transcripts are unfavorably configured for transcriptional elongation, leading to premature transcription termination: dephosphorylation is mediated by the PPP2CA component of the INTAC complex. Dephosphorylated by the PNUTS-PP1 complex in termination zones downstream of poly(A) sites, thereby promoting deceleration of RNA polymerase II transcription. Dephosphorylated by the PNUTS-PP1 complex in termination zones downstream of poly(A) sites, thereby promoting deceleration of RNA polymerase II transcription. Phosphorylation may also stimulate interaction with PIN1. Bulk phosphorylation occurs predominantly in mitosis. Post-translationally, ubiquitinated by UBR5 when not assembled in the DSIF complex, leading to its degradation: UBR5 recognizes and binds a degron that is not accessible when SUPT5H is part of the DSIF complex.

It is found in the nucleus. Its function is as follows. Component of the DRB sensitivity-inducing factor complex (DSIF complex), which regulates mRNA processing and transcription elongation by RNA polymerase II. DSIF positively regulates mRNA capping by stimulating the mRNA guanylyltransferase activity of RNGTT/CAP1A. DSIF also acts cooperatively with the negative elongation factor complex (NELF complex) to enhance transcriptional pausing at sites proximal to the promoter. Transcriptional pausing may facilitate the assembly of an elongation competent RNA polymerase II complex. DSIF and NELF promote pausing by inhibition of the transcription elongation factor TFIIS/S-II. TFIIS/S-II binds to RNA polymerase II at transcription pause sites and stimulates the weak intrinsic nuclease activity of the enzyme. Cleavage of blocked transcripts by RNA polymerase II promotes the resumption of transcription from the new 3' terminus and may allow repeated attempts at transcription through natural pause sites. Following phosphorylation by CDK9, DSIF can also positively regulate transcriptional elongation. The chain is Transcription elongation factor SPT5 (Supt5h) from Mus musculus (Mouse).